The chain runs to 425 residues: Serine--tRNA ligase (425 aa).

L-serine is bound at residue 231–233 (TAE). 262 to 264 (RSE) contributes to the ATP binding site. Glutamate 285 provides a ligand contact to L-serine. 349 to 352 (EISS) contributes to the ATP binding site. Serine 385 contributes to the L-serine binding site.

This sequence belongs to the class-II aminoacyl-tRNA synthetase family. Type-1 seryl-tRNA synthetase subfamily. In terms of assembly, homodimer. The tRNA molecule binds across the dimer.

It is found in the cytoplasm. It carries out the reaction tRNA(Ser) + L-serine + ATP = L-seryl-tRNA(Ser) + AMP + diphosphate + H(+). The catalysed reaction is tRNA(Sec) + L-serine + ATP = L-seryl-tRNA(Sec) + AMP + diphosphate + H(+). It functions in the pathway aminoacyl-tRNA biosynthesis; selenocysteinyl-tRNA(Sec) biosynthesis; L-seryl-tRNA(Sec) from L-serine and tRNA(Sec): step 1/1. Its function is as follows. Catalyzes the attachment of serine to tRNA(Ser). Is also able to aminoacylate tRNA(Sec) with serine, to form the misacylated tRNA L-seryl-tRNA(Sec), which will be further converted into selenocysteinyl-tRNA(Sec). This Bacillus licheniformis (strain ATCC 14580 / DSM 13 / JCM 2505 / CCUG 7422 / NBRC 12200 / NCIMB 9375 / NCTC 10341 / NRRL NRS-1264 / Gibson 46) protein is Serine--tRNA ligase.